Consider the following 135-residue polypeptide: uncharacterized protein (135 aa).

The tract at residues Lys100–Asp125 is disordered. The span at Ser106–Asp115 shows a compositional bias: low complexity.

This is an uncharacterized protein from Microplitis demolitor (Parasitoid wasp).